A 407-amino-acid chain; its full sequence is Proline-rich P65 protein (407 aa).

The segment at 1 to 50 is disordered; that stretch reads MDINKPGWNQSDQQATAYDPNQQQYYGDGSTYYDPDQAVDPNQAYYPDPN. Positions 7 to 25 are enriched in polar residues; the sequence is GWNQSDQQATAYDPNQQQY. A run of 12 repeats spans residues 40-45, 75-80, 83-87, 89-93, 95-99, 101-105, 107-111, 119-123, 140-145, 150-154, 156-160, and 170-174. Residues 40-174 are 12 X 5 AA repeats of D-P-N-Q-A-Y; it reads DPNQAYYPDP…YVTSTDHNAY (135 aa).

Post-translationally, the N-terminus is blocked.

It is found in the cell membrane. The sequence is that of Proline-rich P65 protein (p65) from Mycoplasmoides pneumoniae (strain ATCC 15531 / DSM 23978 / CIP 103766 / NBRC 14401 / NCTC 10119 / FH) (Mycoplasma pneumoniae).